We begin with the raw amino-acid sequence, 567 residues long: Wee1-like protein kinase 2 (567 aa).

Basic and acidic residues-rich tracts occupy residues 1–12 (MDDKDIDKELRQ), 25–35 (EGQKKVEESRE), 42–51 (EKGEVQDSEA), and 64–77 (HELD…KESP). The tract at residues 1–117 (MDDKDIDKEL…DSPSTPKTML (117 aa)) is disordered. Ser76 carries the post-translational modification Phosphoserine. The Nuclear localization signal signature appears at 173 to 175 (KRK). The 275-residue stretch at 212-486 (FLEVEKIGVG…AAALARNTVL (275 aa)) folds into the Protein kinase domain. ATP is bound by residues 218–226 (IGVGEFGTV) and Lys241. Residues 315–329 (KLKDILLQISLGLNY) carry the Nuclear export signal motif. The active-site Proton acceptor is the Asp339. Mg(2+) contacts are provided by Asn344 and Asp380. The stretch at 494–519 (EELQQQLNLEKFKTATLERELREAQQ) forms a coiled coil. The interval 514 to 567 (LREAQQAQSPQGYTHHGDTGVSGTHTGSRSTKRLVGGKSARSSSFTSGEREPLH) is disordered.

It belongs to the protein kinase superfamily. Ser/Thr protein kinase family. WEE1 subfamily. Post-translationally, phosphorylated on serine residues. Phosphorylation leads to increase its activity. As to expression, expressed in oocytes (at protein level). May also be expressed in testis.

The protein resides in the nucleus. The enzyme catalyses L-tyrosyl-[protein] + ATP = O-phospho-L-tyrosyl-[protein] + ADP + H(+). Oocyte-specific protein tyrosine kinase that phosphorylates and inhibits CDK1/CDC2 and acts as a key regulator of meiosis during both prophase I and metaphase II. Required to maintain meiotic arrest in oocytes during the germinal vesicle (GV) stage, a long period of quiescence at dictyate prophase I, by phosphorylating CDK1 at 'Tyr-15', leading to inhibit CDK1 activity and prevent meiotic reentry. Also required for metaphase II exit during egg activation by phosphorylating CDK1 at 'Tyr-15', to ensure exit from meiosis in oocytes and promote pronuclear formation. In Homo sapiens (Human), this protein is Wee1-like protein kinase 2 (WEE2).